Here is a 135-residue protein sequence, read N- to C-terminus: Large ribosomal subunit protein uL15 (135 aa).

A disordered region spans residues 21 to 66 (VGRGQGSGMGKTATRGGKGQTARTGYKAKRGFEGGQQPLQRRLPKI).

The protein belongs to the universal ribosomal protein uL15 family. Part of the 50S ribosomal subunit.

Binds to the 23S rRNA. In Helicobacter pylori (strain HPAG1), this protein is Large ribosomal subunit protein uL15.